Reading from the N-terminus, the 1213-residue chain is Filamin-A-interacting protein 1 (1213 aa).

The tract at residues 1 to 70 is disordered; sequence MRSRNQGGES…TSGECERKTK (70 aa). Residues 61-70 show a composition bias toward basic and acidic residues; sequence TSGECERKTK. Residue S138 is modified to Phosphoserine. Coiled coils occupy residues 192–591 and 624–781; these read DYMN…ELSC and PEDN…LSKR. 2 disordered regions span residues 878–900 and 949–976; these read NGPS…PGEV and KPRI…GPER. Composition is skewed to polar residues over residues 880 to 894 and 960 to 970; these read PSIT…NSSP and VMPQKQKSGDT. Residue S979 is modified to Phosphoserine. The tract at residues 1103–1213 is disordered; that stretch reads VSTGTVLRSP…STTSLGGGKG (111 aa). Positions 1125 to 1138 are enriched in low complexity; the sequence is VTSTITITPVTTSS. The span at 1139-1156 shows a compositional bias: polar residues; the sequence is ARGTQSVSGQDGSSQRPT. Residues 1168 to 1179 are compositionally biased toward low complexity; the sequence is AGKPVVAAPGAG.

The protein belongs to the FILIP1 family. In terms of assembly, interacts with FLNA. Interacts with RHOD (in GTP-bound form). In terms of tissue distribution, moderately expressed in adult heart and brain. Weakly expressed in lung, skeletal muscle, ovary, testis, kidney, and fetal brain, and hardly detectable in liver, pancreas, spleen, and fetal liver. Within brain, moderate expression is found in amygdala and caudate nucleus. Expressed in skin fibroblasts.

It localises to the cytoplasm. The protein resides in the cytoskeleton. Functionally, by acting through a filamin-A/F-actin axis, it controls the start of neocortical cell migration from the ventricular zone. May be able to induce the degradation of filamin-A. The sequence is that of Filamin-A-interacting protein 1 (FILIP1) from Homo sapiens (Human).